Consider the following 185-residue polypeptide: Ribose 1,5-bisphosphate phosphokinase PhnN (185 aa).

10–17 provides a ligand contact to ATP; it reads GPSGSGKD.

The protein belongs to the ribose 1,5-bisphosphokinase family.

It catalyses the reaction alpha-D-ribose 1,5-bisphosphate + ATP = 5-phospho-alpha-D-ribose 1-diphosphate + ADP. Its pathway is metabolic intermediate biosynthesis; 5-phospho-alpha-D-ribose 1-diphosphate biosynthesis; 5-phospho-alpha-D-ribose 1-diphosphate from D-ribose 5-phosphate (route II): step 3/3. Its function is as follows. Catalyzes the phosphorylation of ribose 1,5-bisphosphate to 5-phospho-D-ribosyl alpha-1-diphosphate (PRPP). This chain is Ribose 1,5-bisphosphate phosphokinase PhnN, found in Escherichia coli O157:H7.